Here is a 942-residue protein sequence, read N- to C-terminus: Protein inturned (942 aa).

The span at 1-13 (MADPARRDPRGRA) shows a compositional bias: basic and acidic residues. 2 disordered regions span residues 1 to 54 (MADP…LEPE) and 129 to 150 (PKRH…KHQS). Over residues 22–32 (SQEEEEEESDS) the composition is skewed to acidic residues. Residues 33-48 (DAGASSLGSCSSASSD) show a composition bias toward low complexity. Residues 138–150 (SNTGPVSILKHQS) are compositionally biased toward polar residues. The region spanning 189-267 (LVGVIHQTKW…PMQVKLTFEN (79 aa)) is the PDZ domain. Phosphoserine is present on residues Ser-674 and Ser-678. The tract at residues 707–752 (KARKPSPSRIGGGREPGEGEENVGLSPHTTPDTVRKQRESEGSDDN) is disordered.

Belongs to the inturned family. In terms of assembly, component of the CPLANE (ciliogenesis and planar polarity effectors) complex, composed of INTU, FUZ and WDPCP. Interacts with CPLANE1. Interacts with NPHP4 and DAAM1; INTU is mediating the interaction between NPHP4 and DAAM1.

The protein localises to the cytoplasm. The protein resides in the cell surface. It is found in the cytoskeleton. It localises to the cilium basal body. Its subcellular location is the microtubule organizing center. The protein localises to the centrosome. The protein resides in the centriole. Plays a key role in ciliogenesis and embryonic development. Regulator of cilia formation by controlling the organization of the apical actin cytoskeleton and the positioning of the basal bodies at the apical cell surface, which in turn is essential for the normal orientation of elongating ciliary microtubules. Plays a key role in definition of cell polarity via its role in ciliogenesis but not via conversion extension. Has an indirect effect on hedgehog signaling. Proposed to function as core component of the CPLANE (ciliogenesis and planar polarity effectors) complex involved in the recruitment of peripheral IFT-A proteins to basal bodies. Required for recruitment of CPLANE2 to the mother centriole. Binds phosphatidylinositol 3-phosphate with highest affinity, followed by phosphatidylinositol 4-phosphate and phosphatidylinositol 5-phosphate. The sequence is that of Protein inturned (Intu) from Rattus norvegicus (Rat).